A 902-amino-acid polypeptide reads, in one-letter code: MAASAAAAGEGMEPRALQYEQTLMYGRYTQELGAFAKEEAARIRLGGPEPWKGPPSPRVPPELLEYGQSRCAPCCICSVRCHKFLVSRVGEDWIFLVLLGLLMALVSWAMDYAIAVCLQAQQWMSQGLNTNILLQYLAWVTYPVVLITFSAGFTQILAPQAVGSGIPEMKTILRGVVLKEYLTLKTFVAKVIGLTCALGSGMPLGKEGPFVHIASMCASLLSKFLSLFGGIYENESRNTEMLAAACAVGVGCCFAAPIGGVLFSIEVTSTFFAVRNYWRGFFSATFSAFIFRVLAVWNRDEETITALFKTRFRLDFPFDLQELPAFAVIGIASGFGGALFVYLNRKIVQVMRKQKTINRFLMRKRLLFPALVTLLISTLTFPPGFGQFMAGQLSQKETLVTLFDNRTWVHQGLVEEQEPPSTSQAWNPPRANVFLTLVIFILMKFWMSALATTIPVPCGAFMPVFVIGAAFGRLVGESMAAWFPDGIHTDGSTYRIVPGGYAVVGAAALAGAVTHTVSTAVIVFELTGQIAHILPVMIAVILANAVAQSLQPSLYDSIIRIKKLPYLPELGWGRHQQYRVRVEDIMVRDVPYVALNCTFRDLRLALHRTKGRMLALVESSESMILLGSIERSQVVTLLGAQLSAARRRQHIQERRKAQMSPPSDQDGLPSPESSVHFQVNTEDSAFIPARGETHKPLKPALKRGPSNASKAGETSTGSMESAGIALRSLFCGSPPPEATSDLEKPESCERRKLKRVRISLANDADLEGEMSPEEILEWEEQQLNEPVNFSDCKIDPAPFQLVERTSLHKTHTIFSLLGVDHAYVTSIGRLIGIVTLKELRKAIEGSVTAQGVKVRPPLASFRDSATSSSDTETTEVHALWGPHSCHGLPRDGSPSDSDDKCQ.

Topologically, residues 1-89 are cytoplasmic; sequence MAASAAAAGE…RCHKFLVSRV (89 aa). An essential for channel gating by both voltage and cell volume region spans residues 18–36; it reads QYEQTLMYGRYTQELGAFA. A Phosphothreonine modification is found at threonine 22. The modulates channel gating by both voltage and cell volume stretch occupies residues 38 to 51; sequence EEAARIRLGGPEPW. The next 2 membrane-spanning stretches (helical) occupy residues 90-123 and 132-157; these read GEDW…AQQW and ILLQ…TQIL. A Selectivity filter part_1 motif is present at residues 163–167; sequence GSGIP. Positions 166 to 173 form an intramembrane region, helical; that stretch reads IPEMKTIL. Helical transmembrane passes span 182–200 and 207–225; these read LTLK…ALGS and EGPF…SKFL. A Selectivity filter part_2 motif is present at residues 205 to 209; it reads GKEGP. 2 intramembrane regions (helical) span residues 241–253 and 257–265; these read MLAA…VGCC and PIGGVLFSI. The next 5 helical transmembrane spans lie at 277 to 297, 323 to 351, 360 to 379, 431 to 451, and 459 to 482; these read YWRG…LAVW, LPAF…VQVM, FLMR…ISTL, ANVF…SALA, and GAFM…MAAW. Positions 459–463 match the Selectivity filter part_3 motif; the sequence is GAFMP. The segment at residues 499-513 is an intramembrane region (helical); sequence GGYAVVGAAALAGAV. The segment at residues 514-515 is an intramembrane region (note=Loop between two helices); the sequence is TH. The helical intramembrane region spans 516-527; the sequence is TVSTAVIVFELT. An intramembrane region (note=Loop between two helices) is located at residues 528 to 532; sequence GQIAH. The helical transmembrane segment at 533–550 threads the bilayer; that stretch reads ILPVMIAVILANAVAQSL. Topologically, residues 551-902 are cytoplasmic; that stretch reads QPSLYDSIIR…SPSDSDDKCQ (352 aa). The region spanning 586 to 644 is the CBS 1 domain; sequence MVRDVPYVALNCTFRDLRLALHRTKGRMLALVESSESMILLGSIERSQVVTLLGAQLSA. A disordered region spans residues 648–748; that stretch reads RQHIQERRKA…TSDLEKPESC (101 aa). Polar residues-rich tracts occupy residues 671 to 683 and 706 to 719; these read PESS…NTED and SNAS…TGSM. The 61-residue stretch at 794–854 folds into the CBS 2 domain; the sequence is IDPAPFQLVE…GSVTAQGVKV (61 aa). A Basolateral membrane sorting motif is present at residues 816 to 817; the sequence is LL. A disordered region spans residues 860 to 902; that stretch reads SFRDSATSSSDTETTEVHALWGPHSCHGLPRDGSPSDSDDKCQ.

It belongs to the chloride channel (TC 2.A.49) family. ClC-2/CLCN2 subfamily. As to quaternary structure, homodimer. Interacts with auxiliary subunit HEPACAM.

The protein localises to the cell membrane. It localises to the basolateral cell membrane. The protein resides in the cell projection. It is found in the dendritic spine membrane. Its subcellular location is the axon. The enzyme catalyses chloride(in) = chloride(out). It carries out the reaction thiocyanate(in) = thiocyanate(out). It catalyses the reaction bromide(in) = bromide(out). The catalysed reaction is nitrate(in) = nitrate(out). The enzyme catalyses iodide(out) = iodide(in). Common gate kinetics are down-regulated by intracellular ATP. Inhibited by AK-42, a derivative of meclofenamate. Inhibited by Cd(2+). Inhibited by Zn(2+) and PKC activation. Inhibited at acidic pH. CCLN2:HEPACAM channel conductance is up-regulated upon hypo-osmolarity. Voltage-gated and osmosensitive chloride channel. Forms a homodimeric channel where each subunit has its own ion conduction pathway. Conducts double-barreled currents controlled by two types of gates, two fast glutamate gates that control each subunit independently and a slow common gate that opens and shuts off both subunits simultaneously. Displays inward rectification currents activated upon membrane hyperpolarization and extracellular hypotonicity. Contributes to chloride conductance involved in neuron excitability. In hippocampal neurons, generates a significant part of resting membrane conductance and provides an additional chloride efflux pathway to prevent chloride accumulation in dendrites upon GABA receptor activation. In glia, associates with the auxiliary subunit HEPACAM/GlialCAM at astrocytic processes and myelinated fiber tracts where it may regulate transcellular chloride flux buffering extracellular chloride and potassium concentrations. Regulates aldosterone production in adrenal glands. The opening of CLCN2 channels at hyperpolarized membrane potentials in the glomerulosa causes cell membrane depolarization, activation of voltage-gated calcium channels and increased expression of aldosterone synthase, the rate-limiting enzyme for aldosterone biosynthesis. Contributes to chloride conductance in retinal pigment epithelium involved in phagocytosis of shed photoreceptor outer segments and photoreceptor renewal. Conducts chloride currents at the basolateral membrane of epithelial cells with a role in chloride reabsorption rather than secretion. Permeable to small monovalent anions with chloride &gt; thiocyanate &gt; bromide &gt; nitrate &gt; iodide ion selectivity. The sequence is that of Chloride channel protein 2 (CLCN2) from Cavia porcellus (Guinea pig).